A 194-amino-acid chain; its full sequence is MTIKLIVGLANPGAEYAATRHNAGAWFVDLLAERLRAPLREEAKFFGYTSRVTLGSEDVRLLVPTTFMNLSGKAVAAMASFFRINPDEILVAHDELDLPPGVAKFKLGGGHGGHNGLKDIISKLGNNPNFHRLRIGIGHPGDKNKVVGFVLGKPPVSEQKLIDEAIDEAARCTEMWFTDGLTKATNRLHAFKAQ.

A tRNA-binding site is contributed by tyrosine 16. The active-site Proton acceptor is the histidine 21. The tRNA site is built by phenylalanine 67, asparagine 69, and asparagine 115.

It belongs to the PTH family. As to quaternary structure, monomer.

The protein resides in the cytoplasm. It catalyses the reaction an N-acyl-L-alpha-aminoacyl-tRNA + H2O = an N-acyl-L-amino acid + a tRNA + H(+). Its function is as follows. Hydrolyzes ribosome-free peptidyl-tRNAs (with 1 or more amino acids incorporated), which drop off the ribosome during protein synthesis, or as a result of ribosome stalling. In terms of biological role, catalyzes the release of premature peptidyl moieties from peptidyl-tRNA molecules trapped in stalled 50S ribosomal subunits, and thus maintains levels of free tRNAs and 50S ribosomes. This Shigella flexneri protein is Peptidyl-tRNA hydrolase.